We begin with the raw amino-acid sequence, 328 residues long: MNTKAGILGVGSYLPEQSYDNFHFEKIMDTSDEWISTRTGIKERRFAKESEATSDLASKAALKAIECAKLNVEDIELIILATITPDMSLPSTACIVQDAIGAVNATAFDISAACSGFVYGVTIAKQFVETGCYKNVLVIGAETCSKFLNYDDRTTAVLFGDGAGAAVIGPVNEGGILSTHMGSDGKGKDCLKVPAGGSRLKASKETVEANLHTIEMAGSDVFKFAVRKMAETSLRALEKANLNTTDIDYLVPHQANIRIIQASSKRLELDMKKVYVNIDKYGNMSAASIPVALDEAYREGKIKKGDNVVLVGFGGGLTWGASVVKWTL.

Catalysis depends on residues Cys-114 and His-253. Residues 254–258 are ACP-binding; sequence QANIR. Asn-283 is an active-site residue.

The protein belongs to the thiolase-like superfamily. FabH family. In terms of assembly, homodimer.

It localises to the cytoplasm. The enzyme catalyses malonyl-[ACP] + acetyl-CoA + H(+) = 3-oxobutanoyl-[ACP] + CO2 + CoA. Its pathway is lipid metabolism; fatty acid biosynthesis. Catalyzes the condensation reaction of fatty acid synthesis by the addition to an acyl acceptor of two carbons from malonyl-ACP. Catalyzes the first condensation reaction which initiates fatty acid synthesis and may therefore play a role in governing the total rate of fatty acid production. Possesses both acetoacetyl-ACP synthase and acetyl transacylase activities. Its substrate specificity determines the biosynthesis of branched-chain and/or straight-chain of fatty acids. In Clostridioides difficile (strain 630) (Peptoclostridium difficile), this protein is Beta-ketoacyl-[acyl-carrier-protein] synthase III.